The primary structure comprises 452 residues: Pup--protein ligase (452 aa).

Glu9 is a Mg(2+) binding site. Position 53 (Arg53) interacts with ATP. Tyr55 serves as a coordination point for Mg(2+). Catalysis depends on Asp57, which acts as the Proton acceptor. Glu63 provides a ligand contact to Mg(2+). Positions 66 and 419 each coordinate ATP.

It belongs to the Pup ligase/Pup deamidase family. Pup-conjugating enzyme subfamily.

The catalysed reaction is ATP + [prokaryotic ubiquitin-like protein]-L-glutamate + [protein]-L-lysine = ADP + phosphate + N(6)-([prokaryotic ubiquitin-like protein]-gamma-L-glutamyl)-[protein]-L-lysine.. The protein operates within protein degradation; proteasomal Pup-dependent pathway. It functions in the pathway protein modification; protein pupylation. Catalyzes the covalent attachment of the prokaryotic ubiquitin-like protein modifier Pup to the proteasomal substrate proteins, thereby targeting them for proteasomal degradation. This tagging system is termed pupylation. The ligation reaction involves the side-chain carboxylate of the C-terminal glutamate of Pup and the side-chain amino group of a substrate lysine. In Nocardia farcinica (strain IFM 10152), this protein is Pup--protein ligase.